We begin with the raw amino-acid sequence, 144 residues long: Alpha-crystallin (144 aa).

One can recognise a sHSP domain in the interval 33 to 143 (PTFDTRLMRL…TEKHIQIRST (111 aa)).

The protein belongs to the small heat shock protein (HSP20) family.

It is found in the secreted. It localises to the cell wall. Its subcellular location is the cytoplasm. In terms of biological role, acts as a chaperone. The polypeptide is Alpha-crystallin (hspX) (Mycobacterium bovis (strain ATCC BAA-935 / AF2122/97)).